A 458-amino-acid chain; its full sequence is (R)-6-hydroxynicotine oxidase (458 aa).

The FAD-binding PCMH-type domain maps to R33 to L204. Residues R67–P73, H129–P130, F134–L137, G144, T195, N413, and N450 each bind FAD. H71 carries the pros-8alpha-FAD histidine modification.

Belongs to the oxygen-dependent FAD-linked oxidoreductase family. In terms of assembly, monomer. Requires FAD as cofactor.

The protein resides in the cytoplasm. It carries out the reaction (R)-6-hydroxynicotine + O2 + H2O = 6-hydroxypseudooxynicotine + H2O2. It catalyses the reaction (R)-6-hydroxynicotine + O2 = 6-hydroxy-N-methylmyosmine + H2O2. It functions in the pathway alkaloid degradation; nicotine degradation; 6-hydroxypseudooxynicotine from nicotine (R-isomer route): step 2/2. Its activity is regulated as follows. Inhibited by (S)-6-hydroxynicotine. Inhibited by high concentrations of phenanthroline. Functionally, involved in the degradation of D-nicotine. Catalyzes the oxidation of (R)-6-hydroxynicotine (6-hydroxy-D-nicotine) to 6-hydroxypseudooxynicotine. Oxidation of the pyrrolidine ring of (R)-6-hydroxynicotine leads to the formation of the optically inactive 6-hydroxy-N-methylmyosmine, which hydrolyzes spontaneously to 6-hydroxypseudooxynicotine. Acts with absolute stereospecificity on the D-form of 6-hydroxynicotine. Shows lower activity with (R)-6-hydroxynornicotine, and weak activity with (R)-4-(1-methylpyrrolidine-2-yl)phenol, (R)-6-chloronicotine and (R)-nicotine. This is (R)-6-hydroxynicotine oxidase from Paenarthrobacter nicotinovorans (Arthrobacter nicotinovorans).